Consider the following 317-residue polypeptide: Pseudouridine-5'-phosphate glycosidase (317 aa).

E27 serves as the catalytic Proton donor. Substrate is bound by residues K89 and V109. D141 is a Mn(2+) binding site. Position 143–145 (143–145) interacts with substrate; it reads SAD. The active-site Nucleophile is K162.

This sequence belongs to the pseudouridine-5'-phosphate glycosidase family. As to quaternary structure, homotrimer. Requires Mn(2+) as cofactor.

The catalysed reaction is D-ribose 5-phosphate + uracil = psi-UMP + H2O. Its function is as follows. Catalyzes the reversible cleavage of pseudouridine 5'-phosphate (PsiMP) to ribose 5-phosphate and uracil. Functions biologically in the cleavage direction, as part of a pseudouridine degradation pathway. This chain is Pseudouridine-5'-phosphate glycosidase, found in Sorangium cellulosum (strain So ce56) (Polyangium cellulosum (strain So ce56)).